The chain runs to 351 residues: Foldase protein PrsA 1 (351 aa).

The first 22 residues, 1–22 (MKNSNKLIASVVTLASVMALAA), serve as a signal peptide directing secretion. Cys-23 is lipidated: N-palmitoyl cysteine. A lipid anchor (S-diacylglycerol cysteine) is attached at Cys-23. The region spanning 145-240 (TPTMAVEMIT…KKFYIVKVTK (96 aa)) is the PpiC domain. 2 stretches are compositionally biased toward low complexity: residues 303-317 (KTKA…SESS) and 326-351 (ESEQ…PAAQ). A disordered region spans residues 303-351 (KTKAASESSTTSESSKAAEENPSESEQTQTSSAEEPTETEAQTQEPAAQ).

Belongs to the PrsA family.

The protein localises to the cell membrane. It catalyses the reaction [protein]-peptidylproline (omega=180) = [protein]-peptidylproline (omega=0). Plays a major role in protein secretion by helping the post-translocational extracellular folding of several secreted proteins. The protein is Foldase protein PrsA 1 of Streptococcus pyogenes serotype M6 (strain ATCC BAA-946 / MGAS10394).